We begin with the raw amino-acid sequence, 911 residues long: Leucine--tRNA ligase (911 aa).

A 'HIGH' region motif is present at residues proline 42–histidine 52. Residues threonine 659–serine 663 carry the 'KMSKS' region motif. Position 662 (lysine 662) interacts with ATP.

Belongs to the class-I aminoacyl-tRNA synthetase family.

It is found in the cytoplasm. The catalysed reaction is tRNA(Leu) + L-leucine + ATP = L-leucyl-tRNA(Leu) + AMP + diphosphate. The chain is Leucine--tRNA ligase from Delftia acidovorans (strain DSM 14801 / SPH-1).